The sequence spans 215 residues: FMN-dependent NADH:quinone oxidoreductase (215 aa).

An FMN-binding site is contributed by 17–19 (SAS).

This sequence belongs to the azoreductase type 1 family. Homodimer. It depends on FMN as a cofactor.

The catalysed reaction is 2 a quinone + NADH + H(+) = 2 a 1,4-benzosemiquinone + NAD(+). The enzyme catalyses N,N-dimethyl-1,4-phenylenediamine + anthranilate + 2 NAD(+) = 2-(4-dimethylaminophenyl)diazenylbenzoate + 2 NADH + 2 H(+). Its function is as follows. Quinone reductase that provides resistance to thiol-specific stress caused by electrophilic quinones. In terms of biological role, also exhibits azoreductase activity. Catalyzes the reductive cleavage of the azo bond in aromatic azo compounds to the corresponding amines. The sequence is that of FMN-dependent NADH:quinone oxidoreductase from Clostridium botulinum (strain Eklund 17B / Type B).